The following is a 545-amino-acid chain: Glucose-6-phosphate isomerase (545 aa).

The active-site Proton donor is E351. Residues H382 and K510 contribute to the active site.

Belongs to the GPI family.

The protein resides in the cytoplasm. It carries out the reaction alpha-D-glucose 6-phosphate = beta-D-fructose 6-phosphate. Its pathway is carbohydrate biosynthesis; gluconeogenesis. The protein operates within carbohydrate degradation; glycolysis; D-glyceraldehyde 3-phosphate and glycerone phosphate from D-glucose: step 2/4. Functionally, catalyzes the reversible isomerization of glucose-6-phosphate to fructose-6-phosphate. The protein is Glucose-6-phosphate isomerase of Shewanella halifaxensis (strain HAW-EB4).